A 370-amino-acid polypeptide reads, in one-letter code: MSKRDYYEVLGVDRNASADEVKKAYRKLARKYHPDVNKAPDAEDKFKEVKEAFDTLSDPQKKAHYDQFGHTDPNQGFGGGGAGDFGGFSDIFDMFFGGGGGRRNPNAPRQGADLQYTMTLEFKEAVFGKETTIEIPREETCHTCSGSGAKPGTKPESCPHCGGSGQLNIEQNTPFGRVVNRRVCHHCEGTGKYIKHKCATCGGKGKVRKRKKINVKVPAGIDHGQQIRLSGQGEAGVNGGPAGDLYIVFNVKPHEFFERDGDDIYCEMPLTFVQVALGDEIEVPTLNGKVKLKIPAGTQTGTSFRLRGKGVPNVHGRGQGDQHVQVRVITPKQLSEKEKELLREFAQMSGGRPDEQDDSFFAKVKRAFKG.

Residues Asp-5–Gly-69 enclose the J domain. A CR-type zinc finger spans residues Gly-128–Arg-210. 8 residues coordinate Zn(2+): Cys-141, Cys-144, Cys-158, Cys-161, Cys-184, Cys-187, Cys-198, and Cys-201. CXXCXGXG motif repeat units follow at residues Cys-141 to Gly-148, Cys-158 to Gly-165, Cys-184 to Gly-191, and Cys-198 to Gly-205.

Belongs to the DnaJ family. As to quaternary structure, homodimer. Requires Zn(2+) as cofactor.

The protein resides in the cytoplasm. Its function is as follows. Participates actively in the response to hyperosmotic and heat shock by preventing the aggregation of stress-denatured proteins and by disaggregating proteins, also in an autonomous, DnaK-independent fashion. Unfolded proteins bind initially to DnaJ; upon interaction with the DnaJ-bound protein, DnaK hydrolyzes its bound ATP, resulting in the formation of a stable complex. GrpE releases ADP from DnaK; ATP binding to DnaK triggers the release of the substrate protein, thus completing the reaction cycle. Several rounds of ATP-dependent interactions between DnaJ, DnaK and GrpE are required for fully efficient folding. Also involved, together with DnaK and GrpE, in the DNA replication of plasmids through activation of initiation proteins. This is Chaperone protein DnaJ from Halalkalibacterium halodurans (strain ATCC BAA-125 / DSM 18197 / FERM 7344 / JCM 9153 / C-125) (Bacillus halodurans).